A 198-amino-acid chain; its full sequence is Transcriptional regulator GfcR (198 aa).

It belongs to the purine/pyrimidine phosphoribosyltransferase family. GfcR subfamily.

The polypeptide is Transcriptional regulator GfcR (Thermoplasma acidophilum (strain ATCC 25905 / DSM 1728 / JCM 9062 / NBRC 15155 / AMRC-C165)).